The chain runs to 120 residues: Ribonuclease P protein component 4 (120 aa).

Zn(2+) is bound by residues Cys67, Cys70, Cys96, and Cys99.

Belongs to the eukaryotic/archaeal RNase P protein component 4 family. As to quaternary structure, consists of a catalytic RNA component and at least 4-5 protein subunits. Requires Zn(2+) as cofactor.

Its subcellular location is the cytoplasm. It catalyses the reaction Endonucleolytic cleavage of RNA, removing 5'-extranucleotides from tRNA precursor.. Its function is as follows. Part of ribonuclease P, a protein complex that generates mature tRNA molecules by cleaving their 5'-ends. The chain is Ribonuclease P protein component 4 from Thermococcus sibiricus (strain DSM 12597 / MM 739).